The sequence spans 351 residues: Deoxyuridylate hydroxymethyltransferase (351 aa).

It belongs to the thymidylate synthase family.

It catalyses the reaction dUMP + (6R)-5,10-methylene-5,6,7,8-tetrahydrofolate + H2O = 5-hydroxymethyl-dUMP + (6S)-5,6,7,8-tetrahydrofolate. Catalyzes formation of 5-hydroxymethyldeoxyuridylate (5HMdUMP) as a step in the pathway that replaces dTMP by thymidine hypermodifications in the viral genome. As a final result of the pathway of hypermodification, 5-aminoethyl-2'-deoxyuridine (5-NedU) substitutes for about 30% of thymidines in the viral DNA. These modifications probably prevent degradation of viral genome by the host restriction-modification antiviral defense system. This Pseudomonas aeruginosa protein is Deoxyuridylate hydroxymethyltransferase.